A 400-amino-acid polypeptide reads, in one-letter code: CinA-like protein (400 aa).

It belongs to the CinA family.

The polypeptide is CinA-like protein (Escherichia coli (strain SE11)).